Reading from the N-terminus, the 264-residue chain is MDVYGLIGNPVEHSVSPPMHEAAYEALGLDARYVTFEPASEQLDTALEGASALGVRGLNVTIPFKEDVLDVVEPDPLAERIGAVNTIDFEGEPTGHNTDAAGVIRAFQHHDVERSGTAVVVGAGGAGRAAAFALADEGMEVHIANRTVSRATALATEVPDATGHGLDELAELVPDADVLVNATSVGMEADETPVPKRHLHEGLAVLDAVYAPLETRLLREADAAGATTIDGAWMLLFQGVEAFEIWTGKAAPVEPMNEALRSSL.

Shikimate is bound by residues 14-16 and Thr-61; that span reads SVS. Residue Lys-65 is the Proton acceptor of the active site. Residues Asn-85 and Asp-99 each coordinate shikimate. NADP(+) contacts are provided by residues 122-126, 145-150, and Ala-208; these read GAGGA and NRTVSR. Tyr-210 contacts shikimate. Gly-231 provides a ligand contact to NADP(+).

Belongs to the shikimate dehydrogenase family. In terms of assembly, homodimer.

The enzyme catalyses shikimate + NADP(+) = 3-dehydroshikimate + NADPH + H(+). It functions in the pathway metabolic intermediate biosynthesis; chorismate biosynthesis; chorismate from D-erythrose 4-phosphate and phosphoenolpyruvate: step 4/7. In terms of biological role, involved in the biosynthesis of the chorismate, which leads to the biosynthesis of aromatic amino acids. Catalyzes the reversible NADPH linked reduction of 3-dehydroshikimate (DHSA) to yield shikimate (SA). This Natronomonas pharaonis (strain ATCC 35678 / DSM 2160 / CIP 103997 / JCM 8858 / NBRC 14720 / NCIMB 2260 / Gabara) (Halobacterium pharaonis) protein is Shikimate dehydrogenase (NADP(+)).